A 440-amino-acid polypeptide reads, in one-letter code: MAGKLWTFLLLFGFSWVWPASAHRKLLVLLLDGFRSDYISEDALASLPGFREIVNRGVKVDYLTPDFPSLSYPNYYTLMTGRHCEVHQMIGNYMWDPRTNKSFDIGVNRDSLMPLWWNGSEPLWITLMKARRKVYMYYWPGCEVEILGVRPTYCLEYKNVPTDINFANAVSDALDSLKSGRADLAAIYHERIDVEGHHYGPSSPQRKDALKAVDTVLKYMTQWIQERGLQNDLNVILFSDHGMTDIFWMDKVIELSKYISLDDLQQVKDQGPVVSLWPVPEKHSEIYHKLRTVEHMTVYEKEAIPNRFYYKKGKFVSPLTLVADEGWFIAESREALPFWMNSTGKREGWQHGWHGYDNELMDMRGIFLAFGPDFKSNFRAAPIRSVDVYNIMCNVVGITPLPNNGSWSRVVCMLKSQTSSSPSIPPNSCALVLILLLYFV.

An N-terminal signal peptide occupies residues methionine 1–alanine 22. Substrate contacts are provided by aspartate 32, serine 71, and asparagine 92. Positions 32 and 71 each coordinate Zn(2+). The active-site Nucleophile is serine 71. Position 71 is a phosphoserine (serine 71). N-linked (GlcNAc...) asparagine glycans are attached at residues asparagine 100 and asparagine 118. Cysteine 142 and cysteine 154 are disulfide-bonded. Position 193 (aspartate 193) interacts with substrate. 4 residues coordinate Zn(2+): aspartate 193, histidine 197, aspartate 240, and histidine 241. Histidine 241 serves as a coordination point for substrate. Asparagine 341 is a glycosylation site (N-linked (GlcNAc...) asparagine). Histidine 354 contributes to the substrate binding site. Zn(2+) is bound at residue histidine 354. An N-linked (GlcNAc...) asparagine glycan is attached at asparagine 404. The GPI-anchor amidated serine moiety is linked to residue serine 419. A propeptide spans serine 420–valine 440 (removed in mature form).

The protein belongs to the nucleotide pyrophosphatase/phosphodiesterase family. Homodimer; disulfide-linked. Homotetramer. The cofactor is Zn(2+).

It localises to the cell membrane. The enzyme catalyses sn-glycerol 3-phosphocholine + H2O = phosphocholine + glycerol + H(+). The catalysed reaction is a 1-acyl-sn-glycero-3-phosphocholine + H2O = a 1-acyl-sn-glycerol + phosphocholine + H(+). It carries out the reaction a 1-O-alkyl-sn-glycero-3-phosphocholine + H2O = a 1-O-alkyl-sn-glycerol + phosphocholine + H(+). It catalyses the reaction 1-dodecanoyl-sn-glycero-3-phosphocholine + H2O = 1-dodecanoyl-sn-glycerol + phosphocholine + H(+). The enzyme catalyses 1-hexadecanoyl-sn-glycero-3-phosphocholine + H2O = 1-hexadecanoyl-sn-glycerol + phosphocholine + H(+). The catalysed reaction is 1-(5Z,8Z,11Z,14Z-eicosatetraenoyl)-sn-glycero-3-phosphocholine + H2O = 1-(5Z,8Z,11Z,14Z-eicosatetraenoyl)-sn-glycerol + phosphocholine + H(+). It carries out the reaction 1-tetradecanoyl-sn-glycero-3-phosphocholine + H2O = 1-tetradecanoyl-sn-glycerol + phosphocholine + H(+). It catalyses the reaction sphing-4-enine-phosphocholine + H2O = sphing-4-enine + phosphocholine + H(+). The enzyme catalyses 1-(9Z-octadecenoyl)-sn-glycero-3-phosphocholine + H2O = 1-(9Z-octadecenoyl)-sn-glycerol + phosphocholine + H(+). The catalysed reaction is 1-(9Z,12Z)-octadecadienoyl-sn-glycero-3-phosphocholine + H2O = 1-(9Z,12Z-octadecadienoyl)-sn-glycerol + phosphocholine + H(+). It carries out the reaction glycero-2-phosphocholine + H2O = phosphocholine + glycerol + H(+). With respect to regulation, inhibited by EDTA and EGTA in vitro. Functionally, choline-specific glycerophosphodiesterase that hydrolyzes glycerophosphocholine (GPC) and lysophosphatidylcholine (LPC) and contributes to supplying choline to the cells. Has a preference for LPC with short (12:0 and 14:0) or polyunsaturated (18:2 and 20:4) fatty acids. In vitro, hydrolyzes only choline-containing lysophospholipids, such as sphingosylphosphorylcholine (SPC), platelet-activating factor (PAF) and lysoPAF, but not other lysophospholipids. This Rattus norvegicus (Rat) protein is Glycerophosphocholine cholinephosphodiesterase ENPP6.